The sequence spans 358 residues: Peptide chain release factor 1 (358 aa).

Position 235 is an N5-methylglutamine (Gln-235).

Belongs to the prokaryotic/mitochondrial release factor family. Methylated by PrmC. Methylation increases the termination efficiency of RF1.

The protein localises to the cytoplasm. In terms of biological role, peptide chain release factor 1 directs the termination of translation in response to the peptide chain termination codons UAG and UAA. The chain is Peptide chain release factor 1 from Neisseria meningitidis serogroup B (strain ATCC BAA-335 / MC58).